The chain runs to 460 residues: Ribosomal protein uS12 methylthiotransferase RimO (460 aa).

An MTTase N-terminal domain is found at 18-134; the sequence is MKIHITSLGC…VTSIVAEVLR (117 aa). 6 residues coordinate [4Fe-4S] cluster: Cys-27, Cys-63, Cys-97, Cys-171, Cys-175, and Cys-178. Residues 157-387 enclose the Radical SAM core domain; sequence STPFHYAYVK…MVLQQEISLS (231 aa). In terms of domain architecture, TRAM spans 390 to 456; sequence QEWIGKTLEV…HYDLMGEAID (67 aa).

The protein belongs to the methylthiotransferase family. RimO subfamily. It depends on [4Fe-4S] cluster as a cofactor.

It localises to the cytoplasm. It carries out the reaction L-aspartate(89)-[ribosomal protein uS12]-hydrogen + (sulfur carrier)-SH + AH2 + 2 S-adenosyl-L-methionine = 3-methylsulfanyl-L-aspartate(89)-[ribosomal protein uS12]-hydrogen + (sulfur carrier)-H + 5'-deoxyadenosine + L-methionine + A + S-adenosyl-L-homocysteine + 2 H(+). Its function is as follows. Catalyzes the methylthiolation of an aspartic acid residue of ribosomal protein uS12. This chain is Ribosomal protein uS12 methylthiotransferase RimO, found in Heliobacterium modesticaldum (strain ATCC 51547 / Ice1).